The sequence spans 398 residues: Argininosuccinate synthase (398 aa).

8 to 16 (AYSGGLDTS) provides a ligand contact to ATP. Position 87 (Tyr87) interacts with L-citrulline. Gly117 lines the ATP pocket. Residues Thr119, Asn123, and Asp124 each coordinate L-aspartate. Asn123 provides a ligand contact to L-citrulline. L-citrulline contacts are provided by Arg127, Ser175, Glu260, and Tyr272.

This sequence belongs to the argininosuccinate synthase family. Type 1 subfamily. In terms of assembly, homotetramer.

Its subcellular location is the cytoplasm. It catalyses the reaction L-citrulline + L-aspartate + ATP = 2-(N(omega)-L-arginino)succinate + AMP + diphosphate + H(+). The protein operates within amino-acid biosynthesis; L-arginine biosynthesis; L-arginine from L-ornithine and carbamoyl phosphate: step 2/3. The protein is Argininosuccinate synthase of Mycobacterium marinum (strain ATCC BAA-535 / M).